A 147-amino-acid chain; its full sequence is C-glycoside deglycosidase beta subunit (147 aa).

Belongs to the C-glycoside deglycosidase beta subunit family. As to quaternary structure, heterooctamer composed of four alpha subunits (DfgA) and four beta subunits (DfgB). The cofactor is Mn(2+).

The catalysed reaction is 3''-dehydroisoorientin = 1,5-anhydro-D-erythro-hex-1-en-3-ulose + luteolin. It catalyses the reaction 3''-dehydroisovitexin = 1,5-anhydro-D-erythro-hex-1-en-3-ulose + apigenin. Its activity is regulated as follows. Activity is strongly reduced in the presence of chelating agents. Functionally, carbon-carbon bond-cleaving enzyme which participates in the metabolism of C-glycosides. Acts on the C6-glycosylated compounds 3''-dehydroisoorientin (3''-oxo-homoorientin) and 3''-dehydroisovitexin (3''-oxo-isovitexin). This Eubacterium cellulosolvens (strain ATCC 43171 / JCM 9499 / 6) (Cillobacterium cellulosolvens) protein is C-glycoside deglycosidase beta subunit.